The following is a 182-amino-acid chain: Large ribosomal subunit protein uL6 (182 aa).

Belongs to the universal ribosomal protein uL6 family. Part of the 50S ribosomal subunit.

Functionally, this protein binds to the 23S rRNA, and is important in its secondary structure. It is located near the subunit interface in the base of the L7/L12 stalk, and near the tRNA binding site of the peptidyltransferase center. In Desulforamulus reducens (strain ATCC BAA-1160 / DSM 100696 / MI-1) (Desulfotomaculum reducens), this protein is Large ribosomal subunit protein uL6.